A 140-amino-acid chain; its full sequence is UPF0102 protein alr1796 (140 aa).

The protein belongs to the UPF0102 family.

This chain is UPF0102 protein alr1796, found in Nostoc sp. (strain PCC 7120 / SAG 25.82 / UTEX 2576).